A 320-amino-acid polypeptide reads, in one-letter code: Acetyl-coenzyme A carboxylase carboxyl transferase subunit alpha (320 aa).

Residues 42–295 (IEEKALAALT…GDAIAKSFAD (254 aa)) form the CoA carboxyltransferase C-terminal domain.

Belongs to the AccA family. Acetyl-CoA carboxylase is a heterohexamer composed of biotin carboxyl carrier protein (AccB), biotin carboxylase (AccC) and two subunits each of ACCase subunit alpha (AccA) and ACCase subunit beta (AccD).

The protein localises to the cytoplasm. The enzyme catalyses N(6)-carboxybiotinyl-L-lysyl-[protein] + acetyl-CoA = N(6)-biotinyl-L-lysyl-[protein] + malonyl-CoA. Its pathway is lipid metabolism; malonyl-CoA biosynthesis; malonyl-CoA from acetyl-CoA: step 1/1. In terms of biological role, component of the acetyl coenzyme A carboxylase (ACC) complex. First, biotin carboxylase catalyzes the carboxylation of biotin on its carrier protein (BCCP) and then the CO(2) group is transferred by the carboxyltransferase to acetyl-CoA to form malonyl-CoA. This Rhodopseudomonas palustris (strain BisA53) protein is Acetyl-coenzyme A carboxylase carboxyl transferase subunit alpha.